Reading from the N-terminus, the 494-residue chain is Sulfate adenylyltransferase subunit 1 (494 aa).

One can recognise a tr-type G domain in the interval 28–242 (TRPLRLITCG…TLELATVRST (215 aa)). The interval 37–44 (GSVDDGKS) is G1. 37-44 (GSVDDGKS) is a GTP binding site. Positions 94–98 (GITID) are G2. Residues 115 to 118 (DTPG) are G3. GTP is bound by residues 115–119 (DTPGH) and 170–173 (NKID). Residues 170–173 (NKID) form a G4 region. The G5 stretch occupies residues 207–209 (SAL).

The protein belongs to the TRAFAC class translation factor GTPase superfamily. Classic translation factor GTPase family. CysN/NodQ subfamily. Heterodimer composed of CysD, the smaller subunit, and CysN.

The catalysed reaction is sulfate + ATP + H(+) = adenosine 5'-phosphosulfate + diphosphate. The protein operates within sulfur metabolism; hydrogen sulfide biosynthesis; sulfite from sulfate: step 1/3. With CysD forms the ATP sulfurylase (ATPS) that catalyzes the adenylation of sulfate producing adenosine 5'-phosphosulfate (APS) and diphosphate, the first enzymatic step in sulfur assimilation pathway. APS synthesis involves the formation of a high-energy phosphoric-sulfuric acid anhydride bond driven by GTP hydrolysis by CysN coupled to ATP hydrolysis by CysD. This is Sulfate adenylyltransferase subunit 1 from Agrobacterium fabrum (strain C58 / ATCC 33970) (Agrobacterium tumefaciens (strain C58)).